The chain runs to 376 residues: Glutamate 5-kinase (376 aa).

Residue K18 participates in ATP binding. 3 residues coordinate substrate: S58, D145, and N157. ATP contacts are provided by residues 177–178 and 218–224; these read SD and TGGMASK. In terms of domain architecture, PUA spans 280 to 358; it reads TGALTLDAGA…SELPGELRRP (79 aa).

This sequence belongs to the glutamate 5-kinase family.

The protein localises to the cytoplasm. It catalyses the reaction L-glutamate + ATP = L-glutamyl 5-phosphate + ADP. Its pathway is amino-acid biosynthesis; L-proline biosynthesis; L-glutamate 5-semialdehyde from L-glutamate: step 1/2. Its function is as follows. Catalyzes the transfer of a phosphate group to glutamate to form L-glutamate 5-phosphate. This chain is Glutamate 5-kinase, found in Mycobacterium tuberculosis (strain CDC 1551 / Oshkosh).